The primary structure comprises 619 residues: E3 ubiquitin-protein ligase complex SLX5-SLX8 subunit SLX5 (619 aa).

The disordered stretch occupies residues 1 to 23; that stretch reads MHSDTNGRTKSNNSPSDNNPNET. A compositionally biased stretch (low complexity) spans 11-21; that stretch reads SNNSPSDNNPN. Phosphoserine occurs at positions 14 and 29. The tract at residues 63–90 is disordered; it reads VRSDSRSRNSQRTHITASSERPDFQANN. Residues 70–90 are compositionally biased toward polar residues; that stretch reads RNSQRTHITASSERPDFQANN. Residues 201 to 335 are EUC1 interaction domain; the sequence is SRRQLLRRSA…ALFTEFRNQL (135 aa).

In terms of assembly, component of the heterodimeric SUMO-targeted ubiquitin ligase (STUbL) complex composed of SLX5 and SLX8. Interacts with sirtuin SIR2. Interacts with KAR9. Interacts with EUC1.

Its subcellular location is the nucleus. The protein localises to the chromosome. It is found in the centromere. It localises to the kinetochore. The enzyme catalyses S-ubiquitinyl-[E2 ubiquitin-conjugating enzyme]-L-cysteine + [acceptor protein]-L-lysine = [E2 ubiquitin-conjugating enzyme]-L-cysteine + N(6)-ubiquitinyl-[acceptor protein]-L-lysine.. The protein operates within protein modification; protein ubiquitination. Functionally, component of the SUMO-targeted ubiquitin ligase (STUbL) complex SLX5/SLX8 that mediates ubiquitination and subsequent desumoylation of sumoylated proteins and proteins containing SUMO-like domains for their degradation. The STUbL complex SLX5/SLX8 stimulates ubiquitin conjugating enzymes, including UBC1, UBC4, UBC5 and UBC13-MMS2, and mediates the proteolytic down-regulation of sumoylated proteins. The STUbL complex SLX5/SLX8 is involved in ubiquitin-mediated degradation of histone variant CSE4, preventing mislocalization to euchromatin. The complex plays an essential role in maintenance of chromosome stability and links SUMO-dependent ubiquitination to a centromere-specific function during mitosis. The complex is involved in proteolysis of spindle positioning protein KAR9 and ensures correct spindle function by regulating levels of microtubule-associated proteins. During replication, the complex helps prevent DNA lesions via recombination and has a role in localizing the DNA damage protein DCD2. The complex especially ubiquitinates the nuclease YEN1 and prevents persistent accumulation of a fraction of YEN1 associated with sites of activity in late G2/M and helps maintain the balance between pro- and anti-crossover pathways during homologous recombination. It is also involved in ubiquitin-mediated degradation of DNA repair proteins RAD52 and RAD57. Along with SIR2, promotes silencing of genes at telomeric or ribosomal DNA (rDNA) loci. Finally, the complex is recruited to distinct genomic hotspots of non-H2B protein ubiquitination (ub-hotspots) by the sumoylated transcription factor-like protein EUC1 where it ubiquitinates EUC1 and presumably other targets. The chain is E3 ubiquitin-protein ligase complex SLX5-SLX8 subunit SLX5 (SLX5) from Saccharomyces cerevisiae (strain ATCC 204508 / S288c) (Baker's yeast).